The primary structure comprises 495 residues: Bifunctional protein GlmU (495 aa).

The segment at 1 to 241 (MPQQTAVVVL…AAKVTGVNDR (241 aa)) is pyrophosphorylase. Residues 10 to 13 (LAAG), Lys-24, Gln-81, and 86 to 87 (GT) each bind UDP-N-acetyl-alpha-D-glucosamine. Residue Asp-112 participates in Mg(2+) binding. UDP-N-acetyl-alpha-D-glucosamine is bound by residues Gly-151, Glu-166, Asn-181, and Asn-239. Asn-239 is a Mg(2+) binding site. Residues 242–262 (VQLSIATRTMNRYILERHMRA) are linker. Residues 263–495 (GVTIIDPAST…QATEQKDGEQ (233 aa)) are N-acetyltransferase. The UDP-N-acetyl-alpha-D-glucosamine site is built by Arg-344 and Lys-362. The Proton acceptor role is filled by His-374. Residues Tyr-377 and Asn-388 each coordinate UDP-N-acetyl-alpha-D-glucosamine. Residues Ala-391, 397-398 (NY), Ser-416, and Ala-434 each bind acetyl-CoA. The segment at 467–495 (GTAAATAAAQALAADEKSSQATEQKDGEQ) is disordered. Residues 468-479 (TAAATAAAQALA) are compositionally biased toward low complexity. Over residues 480–495 (ADEKSSQATEQKDGEQ) the composition is skewed to basic and acidic residues.

The protein in the N-terminal section; belongs to the N-acetylglucosamine-1-phosphate uridyltransferase family. In the C-terminal section; belongs to the transferase hexapeptide repeat family. Homotrimer. Mg(2+) is required as a cofactor.

The protein resides in the cytoplasm. The enzyme catalyses alpha-D-glucosamine 1-phosphate + acetyl-CoA = N-acetyl-alpha-D-glucosamine 1-phosphate + CoA + H(+). It catalyses the reaction N-acetyl-alpha-D-glucosamine 1-phosphate + UTP + H(+) = UDP-N-acetyl-alpha-D-glucosamine + diphosphate. It functions in the pathway nucleotide-sugar biosynthesis; UDP-N-acetyl-alpha-D-glucosamine biosynthesis; N-acetyl-alpha-D-glucosamine 1-phosphate from alpha-D-glucosamine 6-phosphate (route II): step 2/2. The protein operates within nucleotide-sugar biosynthesis; UDP-N-acetyl-alpha-D-glucosamine biosynthesis; UDP-N-acetyl-alpha-D-glucosamine from N-acetyl-alpha-D-glucosamine 1-phosphate: step 1/1. Its pathway is bacterial outer membrane biogenesis; LPS lipid A biosynthesis. Its function is as follows. Catalyzes the last two sequential reactions in the de novo biosynthetic pathway for UDP-N-acetylglucosamine (UDP-GlcNAc). The C-terminal domain catalyzes the transfer of acetyl group from acetyl coenzyme A to glucosamine-1-phosphate (GlcN-1-P) to produce N-acetylglucosamine-1-phosphate (GlcNAc-1-P), which is converted into UDP-GlcNAc by the transfer of uridine 5-monophosphate (from uridine 5-triphosphate), a reaction catalyzed by the N-terminal domain. The polypeptide is Bifunctional protein GlmU (Nocardia farcinica (strain IFM 10152)).